We begin with the raw amino-acid sequence, 393 residues long: Digeranylgeranylglycerophospholipid reductase (393 aa).

Ala-13, Asp-32, Cys-43, Ala-44, Gly-46, Arg-95, Val-119, Asp-274, and Gly-286 together coordinate FAD. 2 residues coordinate a 2,3-bis-O-(geranylgeranyl)-sn-glycerol 1-phospholipid: Lys-327 and Gly-363.

Belongs to the geranylgeranyl reductase family. DGGGPL reductase subfamily. Requires FAD as cofactor.

The catalysed reaction is a 2,3-bis-O-phytanyl-sn-glycerol 1-phospholipid + 8 A = a 2,3-bis-O-(geranylgeranyl)-sn-glycerol 1-phospholipid + 8 AH2. The enzyme catalyses 2,3-bis-O-(phytanyl)-sn-glycerol 1-phosphate + 8 A = 2,3-bis-O-(geranylgeranyl)-sn-glycerol 1-phosphate + 8 AH2. It catalyses the reaction CDP-2,3-bis-O-(geranylgeranyl)-sn-glycerol + 8 AH2 = CDP-2,3-bis-O-(phytanyl)-sn-glycerol + 8 A. It carries out the reaction archaetidylserine + 8 AH2 = 2,3-bis-O-phytanyl-sn-glycero-3-phospho-L-serine + 8 A. It participates in membrane lipid metabolism; glycerophospholipid metabolism. Functionally, is involved in the reduction of 2,3-digeranylgeranylglycerophospholipids (unsaturated archaeols) into 2,3-diphytanylglycerophospholipids (saturated archaeols) in the biosynthesis of archaeal membrane lipids. Catalyzes the formation of archaetidic acid (2,3-di-O-phytanyl-sn-glyceryl phosphate) from 2,3-di-O-geranylgeranylglyceryl phosphate (DGGGP) via the hydrogenation of each double bond of the isoprenoid chains. Is also probably able to reduce double bonds of geranyl groups in CDP-2,3-bis-O-(geranylgeranyl)-sn-glycerol and archaetidylserine, thus acting at various stages in the biosynthesis of archaeal membrane lipids. This Pyrococcus furiosus (strain ATCC 43587 / DSM 3638 / JCM 8422 / Vc1) protein is Digeranylgeranylglycerophospholipid reductase.